Consider the following 105-residue polypeptide: MRGGGNMQQMMKQMQKMQKKMAQEQKKLKEERIVGTAGGGMVAVTVTGHKEVVDVEIKEEAVDPDDIEMLQDLVLAATNEAMNKADELTQERLGKHTQGLNIPGM.

Residues 1–33 (MRGGGNMQQMMKQMQKMQKKMAQEQKKLKEERI) form a disordered region. Over residues 7–16 (MQQMMKQMQK) the composition is skewed to low complexity. Over residues 21–33 (MAQEQKKLKEERI) the composition is skewed to basic and acidic residues.

It belongs to the YbaB/EbfC family. As to quaternary structure, homodimer.

It localises to the cytoplasm. It is found in the nucleoid. Its function is as follows. Binds to DNA and alters its conformation. May be involved in regulation of gene expression, nucleoid organization and DNA protection. This Staphylococcus aureus (strain JH1) protein is Nucleoid-associated protein SaurJH1_0513.